The sequence spans 475 residues: Ankyrin repeat, SAM and basic leucine zipper domain-containing protein 1 (475 aa).

Residues 1 to 24 (MAAGPLRGLAVAGGGESSESEDDG) are disordered. 3 positions are modified to phosphoserine: S17, S18, and S20. ANK repeat units lie at residues 45–74 (ERQETFKKALTSGNISLVEELLDSGISVDT), 78–107 (YGWTSLMYAASVSNVELVRVLLDRGANASF), 110–144 (DKQTVLITACSARGSEEKILKCIELLLSRNADPNV), 148–177 (RLMTPIMYAARDGHPQVVALLVAHGAEVNT), 181–210 (NGYTALTWAARQGHKNVVLKLLELGANKMI), and 214–243 (DGKTPSEIAKRNKHLEIFNFLSLTLNPLEG). An SAM domain is found at 272–334 (SYTAFGDLEI…KIMAALKELE (63 aa)).

In terms of assembly, interacts with DDX4, PIWIL1, RANBP9 and TDRD1.

The protein localises to the cytoplasm. Its function is as follows. Plays a central role during spermatogenesis by repressing transposable elements and preventing their mobilization, which is essential for the germline integrity. Acts via the piRNA metabolic process, which mediates the repression of transposable elements during meiosis by forming complexes composed of piRNAs and Piwi proteins and governs the methylation and subsequent repression of transposons. Its association with pi-bodies suggests a participation in the primary piRNAs metabolic process. Required prior to the pachytene stage to facilitate the production of multiple types of piRNAs, including those associated with repeats involved in the regulation of retrotransposons. May act by mediating protein-protein interactions during germ cell maturation. The sequence is that of Ankyrin repeat, SAM and basic leucine zipper domain-containing protein 1 (ASZ1) from Ovis aries (Sheep).